We begin with the raw amino-acid sequence, 329 residues long: NTD biosynthesis operon regulator NtdR (329 aa).

The HTH lacI-type domain occupies 2–56 (PTIDEIAKLCNVSKTTVSRVLNNHPYVSKEKRDMILKAINELDYTPNYLARNFRR). Positions 4–23 (IDEIAKLCNVSKTTVSRVLN) form a DNA-binding region, H-T-H motif.

Its function is as follows. Positively regulates the ntdABC operon and negatively regulates its own transcription. Binds to NTD to induce ntdABC transcription. The chain is NTD biosynthesis operon regulator NtdR (ntdR) from Bacillus subtilis (strain 168).